The following is a 477-amino-acid chain: Cysteine--tRNA ligase (477 aa).

Zn(2+) is bound at residue cysteine 42. Residues 44 to 54 (ATVQGLPHIGH) carry the 'HIGH' region motif. Residues cysteine 220, histidine 245, and glutamate 249 each contribute to the Zn(2+) site. The short motif at 276–280 (KMSKS) is the 'KMSKS' region element. Residue lysine 279 coordinates ATP.

It belongs to the class-I aminoacyl-tRNA synthetase family. Monomer. It depends on Zn(2+) as a cofactor.

It is found in the cytoplasm. It catalyses the reaction tRNA(Cys) + L-cysteine + ATP = L-cysteinyl-tRNA(Cys) + AMP + diphosphate. This Mycolicibacterium smegmatis (strain ATCC 700084 / mc(2)155) (Mycobacterium smegmatis) protein is Cysteine--tRNA ligase.